The following is a 313-amino-acid chain: tRNA dimethylallyltransferase (313 aa).

17–24 (GPTASGKT) is an ATP binding site. Position 19 to 24 (19 to 24 (TASGKT)) interacts with substrate. 4 interaction with substrate tRNA regions span residues 42–45 (DSAL), 166–170 (QRLSR), 247–252 (RCVGYR), and 280–287 (KRQITWLR).

This sequence belongs to the IPP transferase family. As to quaternary structure, monomer. Mg(2+) serves as cofactor.

The enzyme catalyses adenosine(37) in tRNA + dimethylallyl diphosphate = N(6)-dimethylallyladenosine(37) in tRNA + diphosphate. Functionally, catalyzes the transfer of a dimethylallyl group onto the adenine at position 37 in tRNAs that read codons beginning with uridine, leading to the formation of N6-(dimethylallyl)adenosine (i(6)A). This chain is tRNA dimethylallyltransferase, found in Photorhabdus laumondii subsp. laumondii (strain DSM 15139 / CIP 105565 / TT01) (Photorhabdus luminescens subsp. laumondii).